The following is a 463-amino-acid chain: MTTETRSLYSQLPAIDRLLRDSSFLSLRDTYGHTRVVELLRQMLDEAREVIRDSQTLPAWCENWAQEVDARLTKEAQSALRPVINLTGTVLHTNLGRALQAEAAVEAVTKAMRSPVTLEYDLDDAGRGHRDRALAQLLCRITGAEDACIVNNNAAAVLLMLAATASGKEVVVSRGELVEIGGAFRIPDVMRQAGCTLHEVGTTNRTHANDYRQAVNENTALLMKVHTSNYSIQGFTKAIDEAELVALGKELDVPVVTDLGSGSLVDLSQYGLPKEPMPQELIAAGVSLVSFSGDKLLGGPQAGIIVGKKEMIARLQSHPLKRALRADKMTLAALEATLRLYLHSEALSEKLPTLRLLTRSAEVIQIQAQRLQAPLAAHYGAEFAVQVMPCLSQIGSGSLPVDRLPSAALTFTPHDGRGSHLESLAARWRELPVPVIGRIYDGRLWLDLRCLEDEQRFLEMLLK.

N6-(pyridoxal phosphate)lysine is present on K295.

Belongs to the SelA family. As to quaternary structure, homodecamer; pentamer of dimers. Binds only one seryl-tRNA(Sec) per dimer. It depends on pyridoxal 5'-phosphate as a cofactor.

The protein resides in the cytoplasm. The enzyme catalyses L-seryl-tRNA(Sec) + selenophosphate + H(+) = L-selenocysteinyl-tRNA(Sec) + phosphate. It participates in aminoacyl-tRNA biosynthesis; selenocysteinyl-tRNA(Sec) biosynthesis; selenocysteinyl-tRNA(Sec) from L-seryl-tRNA(Sec) (bacterial route): step 1/1. Functionally, converts seryl-tRNA(Sec) to selenocysteinyl-tRNA(Sec) required for selenoprotein biosynthesis. This Escherichia coli O45:K1 (strain S88 / ExPEC) protein is L-seryl-tRNA(Sec) selenium transferase.